Consider the following 191-residue polypeptide: Thymidylate kinase (191 aa).

7-14 lines the ATP pocket; it reads GIDGVGKS.

This sequence belongs to the thymidylate kinase family.

It carries out the reaction dTMP + ATP = dTDP + ADP. Phosphorylation of dTMP to form dTDP in both de novo and salvage pathways of dTTP synthesis. This is Thymidylate kinase from Helicobacter acinonychis (strain Sheeba).